The sequence spans 163 residues: Large ribosomal subunit protein uL15 (163 aa).

The segment covering 27–37 (SGLGKTAGRGQ) has biased composition (gly residues). Residues 27–46 (SGLGKTAGRGQKGQKSRSGV) form a disordered region.

The protein belongs to the universal ribosomal protein uL15 family. As to quaternary structure, part of the 50S ribosomal subunit.

Binds to the 23S rRNA. The polypeptide is Large ribosomal subunit protein uL15 (Zymomonas mobilis subsp. mobilis (strain ATCC 31821 / ZM4 / CP4)).